The chain runs to 422 residues: Interleukin-11 receptor subunit alpha (422 aa).

A signal peptide spans 1–22 (MSSSCSGLSRVLVAVATALVSA). Topologically, residues 24-370 (SPCPQAWGPP…DSVEQVAVLV (347 aa)) are extracellular. Residues 27-110 (PQAWGPPGVQ…LGGTVTLQLG (84 aa)) form the Ig-like C2-type domain. 3 disulfides stabilise this stretch: Cys48/Cys94, Cys120/Cys130, and Cys170/Cys180. Fibronectin type-III domains lie at 112–219 (PPAR…LRPD) and 220–317 (PPQG…TPST). An N-linked (GlcNAc...) asparagine glycan is attached at Asn127. The N-linked (GlcNAc...) asparagine glycan is linked to Asn194. The WSXWS motif motif lies at 304-308 (WSTWS). Residues 335 to 355 (EVEPQVDSPAPPRPSLQPHPR) are disordered. Residues 371–391 (SLGILSFLGLVAGALALGLWL) traverse the membrane as a helical segment. Over 392 to 422 (RLRRGGKDGSPKPGFLASVIPVDRHPGAPNL) the chain is Cytoplasmic.

Belongs to the type I cytokine receptor family. Type 3 subfamily. On IL11 binding, forms a multimer complex with IL6ST/gp130. A short soluble form is also released from the membrane by proteolysis. The sIL11RA is formed either by limited proteolysis of membrane-bound receptors, a process referred to as ectodomain shedding, or directly secreted from the cells after alternative mRNA splicing. mIL11RA is cleaved by the proteases ADAM10, ELANE and PRTN3.

The protein localises to the membrane. The protein resides in the secreted. In terms of biological role, receptor for interleukin-11 (IL11). The receptor systems for IL6, LIF, OSM, CNTF, IL11 and CT1 can utilize IL6ST for initiating signal transmission. The IL11/IL11RA/IL6ST complex may be involved in the control of proliferation and/or differentiation of skeletogenic progenitor or other mesenchymal cells. Essential for the normal development of craniofacial bones and teeth. Restricts suture fusion and tooth number. Soluble form of IL11 receptor (sIL11RA) that acts as an agonist of IL11 activity. The IL11:sIL11RA complex binds to IL6ST/gp130 on cell surfaces and induces signaling also on cells that do not express membrane-bound IL11RA in a process called IL11 trans-signaling. This Pongo abelii (Sumatran orangutan) protein is Interleukin-11 receptor subunit alpha (IL11RA).